The chain runs to 276 residues: NH(3)-dependent NAD(+) synthetase (276 aa).

Residue 43–50 (GISGGVDS) participates in ATP binding. Aspartate 49 lines the Mg(2+) pocket. Residue arginine 146 coordinates deamido-NAD(+). Threonine 166 serves as a coordination point for ATP. Glutamate 171 provides a ligand contact to Mg(2+). Lysine 179 and aspartate 186 together coordinate deamido-NAD(+). ATP contacts are provided by lysine 195 and threonine 217. Deamido-NAD(+) is bound at residue 266–267 (HK).

Belongs to the NAD synthetase family. In terms of assembly, homodimer.

The catalysed reaction is deamido-NAD(+) + NH4(+) + ATP = AMP + diphosphate + NAD(+) + H(+). It functions in the pathway cofactor biosynthesis; NAD(+) biosynthesis; NAD(+) from deamido-NAD(+) (ammonia route): step 1/1. In terms of biological role, catalyzes the ATP-dependent amidation of deamido-NAD to form NAD. Uses ammonia as a nitrogen source. The protein is NH(3)-dependent NAD(+) synthetase of Shewanella putrefaciens (strain CN-32 / ATCC BAA-453).